The chain runs to 213 residues: Response regulator GacA (213 aa).

A Response regulatory domain is found at 3–119 (RVLVVDDHDL…EMVQAIRLVF (117 aa)). Asp-54 is subject to 4-aspartylphosphate. The HTH luxR-type domain occupies 142–207 (SDSPFDALSE…ELTLLAVRHG (66 aa)). Positions 166 to 185 (VQIISDKLCLSPKTVNTYRY) form a DNA-binding region, H-T-H motif.

Post-translationally, phosphorylated by GacS.

Its function is as follows. Member of the two-component regulatory system GacA/GacS which controls the expression of secondary metabolites and extracellular products. Acts (probably primarily) by activating expression of CsrA1 and CsrA2 antagonist small RNAs (sRNA) RsmX, RsmY and RsmZ which bind to and prevent translation repression by CsrA1 and CsrA2. Involved in the regulation of secondary metabolism and in the synthesis of the antifungal factors cyanide, 2,4-diacetylphloroglucinol and pyoluteorin. Involved in synthesis of the autoinducing signal (unrelated to N-acylhomoserine lactones, induces the Gac/Csr cascade). Exercises positive post-transcriptional control over the hcnABC and aprA genes; acts upstream of CsrA2 (rsmA). Controls expression of csrA1 (rsmE) and csrA2. In Pseudomonas protegens (strain DSM 19095 / LMG 27888 / CFBP 6595 / CHA0), this protein is Response regulator GacA.